A 237-amino-acid polypeptide reads, in one-letter code: tRNA (guanine-N(1)-)-methyltransferase (237 aa).

Residues glycine 113 and 133–138 each bind S-adenosyl-L-methionine; that span reads MGDYIL.

Belongs to the RNA methyltransferase TrmD family. In terms of assembly, homodimer.

It localises to the cytoplasm. The enzyme catalyses guanosine(37) in tRNA + S-adenosyl-L-methionine = N(1)-methylguanosine(37) in tRNA + S-adenosyl-L-homocysteine + H(+). Its function is as follows. Specifically methylates guanosine-37 in various tRNAs. The protein is tRNA (guanine-N(1)-)-methyltransferase of Wolinella succinogenes (strain ATCC 29543 / DSM 1740 / CCUG 13145 / JCM 31913 / LMG 7466 / NCTC 11488 / FDC 602W) (Vibrio succinogenes).